Consider the following 781-residue polypeptide: Cadherin-24 (781 aa).

Residues M1–A22 form the signal peptide. Residues A23–R44 constitute a propeptide that is removed on maturation. At S45–A603 the chain is on the extracellular side. Cadherin domains are found at residues W46–F150, P151–F259, P260–F374, T375–L479, and L479–A592. N446, N510, and N525 each carry an N-linked (GlcNAc...) asparagine glycan. The chain crosses the membrane as a helical span at residues L604–L624. Over R625–P781 the chain is Cytoplasmic. Disordered regions lie at residues L665–A700 and E731–W762. Residues R733–G746 are compositionally biased toward low complexity.

Associates with alpha-, beta- and delta-catenins.

The protein resides in the cell membrane. Functionally, cadherins are calcium-dependent cell adhesion proteins. They preferentially interact with themselves in a homophilic manner in connecting cells; cadherins may thus contribute to the sorting of heterogeneous cell types. Cadherin-24 mediate strong cell-cell adhesion. This chain is Cadherin-24 (Cdh24), found in Mus musculus (Mouse).